The primary structure comprises 556 residues: Genetic interactor of prohibitins 3, mitochondrial (556 aa).

Residues 1–21 constitute a mitochondrion transit peptide; it reads MLNLCHALRGVRQFSCSVIVK. Residues 113-305 form the CP-type G domain; sequence ESTLNDILNY…LFDLPGYSTS (193 aa).

This sequence belongs to the TRAFAC class YlqF/YawG GTPase family. GEP3 subfamily.

It is found in the mitochondrion. Functionally, interacts genetically with prohibitins and thus may be involved in the mitochondrial lipid metabolism. This chain is Genetic interactor of prohibitins 3, mitochondrial (GEP3), found in Saccharomyces cerevisiae (strain ATCC 204508 / S288c) (Baker's yeast).